Consider the following 249-residue polypeptide: Triosephosphate isomerase (249 aa).

Substrate is bound at residue 9-11 (NWK). Residue His-95 is the Electrophile of the active site. Glu-165 serves as the catalytic Proton acceptor. Substrate-binding positions include Gly-171, Ser-210, and 231–232 (GG).

The protein belongs to the triosephosphate isomerase family. In terms of assembly, homodimer.

The protein resides in the cytoplasm. The catalysed reaction is D-glyceraldehyde 3-phosphate = dihydroxyacetone phosphate. It participates in carbohydrate biosynthesis; gluconeogenesis. It functions in the pathway carbohydrate degradation; glycolysis; D-glyceraldehyde 3-phosphate from glycerone phosphate: step 1/1. Functionally, involved in the gluconeogenesis. Catalyzes stereospecifically the conversion of dihydroxyacetone phosphate (DHAP) to D-glyceraldehyde-3-phosphate (G3P). The chain is Triosephosphate isomerase from Hyphomonas neptunium (strain ATCC 15444).